A 1374-amino-acid polypeptide reads, in one-letter code: Probable multidrug resistance-associated protein lethal(2)03659 (1374 aa).

Residues 1–40 (MDKQPVLEPTFDSVSERENTSIEESSLLENNGFDHRNKDE) form a disordered region. 6 helical membrane-spanning segments follow: residues 159 to 179 (LLRV…VVEL), 205 to 225 (AGFY…MILT), 282 to 302 (YTVH…YLMY), 305 to 325 (IGIS…IQMY), 404 to 424 (IFLS…EIAF), and 426 to 446 (ITAY…SAII). Residues 168 to 449 (GFPGLAIFVV…YVPSAIIQTA (282 aa)) enclose the ABC transmembrane type-1 1 domain. The disordered stretch occupies residues 466–492 (ELGSSDKSEGPSKDTVPGNPPSNNNEA). Positions 499 to 722 (ISIRDLKAKW…GLITGLGSLS (224 aa)) constitute an ABC transporter 1 domain. An ATP-binding site is contributed by 534–541 (GLTGSGKS). An N-linked (GlcNAc...) asparagine glycan is attached at asparagine 561. The disordered stretch occupies residues 723–766 (KTDKAKTEEQEPLNLNSPDNKNEVTPIKENSEQTVGGSSSGKEH). 5 consecutive transmembrane segments (helical) span residues 787 to 807 (GGGL…QVAV), 845 to 865 (LIII…FNIA), 913 to 933 (VVLV…IVIA), 938 to 958 (LLLV…NLYL), and 1025 to 1045 (YCMN…FFAF). The ABC transmembrane type-1 2 domain occupies 793-1079 (FLVMLSSSVL…GVRQTAELEN (287 aa)). Residues 1119–1352 (FKELNLRYTP…SDSKVFHNLV (234 aa)) form the ABC transporter 2 domain. 1153–1160 (GRTGAGKS) lines the ATP pocket. Asparagine 1254 and asparagine 1353 each carry an N-linked (GlcNAc...) asparagine glycan.

It belongs to the ABC transporter superfamily. ABCC family. Conjugate transporter (TC 3.A.1.208) subfamily. Uniform expression in embryos.

Its subcellular location is the membrane. Functionally, vital for development. The polypeptide is Probable multidrug resistance-associated protein lethal(2)03659 (l(2)03659) (Drosophila melanogaster (Fruit fly)).